A 251-amino-acid chain; its full sequence is Insertion sequence IS5376 putative ATP-binding protein (251 aa).

Gly105–Thr112 contacts ATP.

The protein belongs to the IS21/IS1162 putative ATP-binding protein family.

The protein is Insertion sequence IS5376 putative ATP-binding protein of Geobacillus stearothermophilus (Bacillus stearothermophilus).